Reading from the N-terminus, the 619-residue chain is Dihydroxy-acid dehydratase (619 aa).

Residue D81 coordinates Mg(2+). C122 lines the [2Fe-2S] cluster pocket. Mg(2+) is bound by residues D123 and K124. K124 bears the N6-carboxylysine mark. C195 provides a ligand contact to [2Fe-2S] cluster. E492 is a Mg(2+) binding site. S518 serves as the catalytic Proton acceptor.

It belongs to the IlvD/Edd family. In terms of assembly, homodimer. Requires [2Fe-2S] cluster as cofactor. Mg(2+) serves as cofactor.

The enzyme catalyses (2R)-2,3-dihydroxy-3-methylbutanoate = 3-methyl-2-oxobutanoate + H2O. It catalyses the reaction (2R,3R)-2,3-dihydroxy-3-methylpentanoate = (S)-3-methyl-2-oxopentanoate + H2O. Its pathway is amino-acid biosynthesis; L-isoleucine biosynthesis; L-isoleucine from 2-oxobutanoate: step 3/4. It functions in the pathway amino-acid biosynthesis; L-valine biosynthesis; L-valine from pyruvate: step 3/4. Functions in the biosynthesis of branched-chain amino acids. Catalyzes the dehydration of (2R,3R)-2,3-dihydroxy-3-methylpentanoate (2,3-dihydroxy-3-methylvalerate) into 2-oxo-3-methylpentanoate (2-oxo-3-methylvalerate) and of (2R)-2,3-dihydroxy-3-methylbutanoate (2,3-dihydroxyisovalerate) into 2-oxo-3-methylbutanoate (2-oxoisovalerate), the penultimate precursor to L-isoleucine and L-valine, respectively. In Synechococcus elongatus (strain ATCC 33912 / PCC 7942 / FACHB-805) (Anacystis nidulans R2), this protein is Dihydroxy-acid dehydratase.